We begin with the raw amino-acid sequence, 896 residues long: Probable sodium/sulfate cotransporter 3 (896 aa).

Helical transmembrane passes span 1-21, 47-69, 106-126, 140-160, and 186-206; these read MAAI…SFII, IITV…IFLY, VMVL…IPIL, LLIP…IGTS, and MFDI…FIIL. RCK C-terminal domains are found at residues 212–296, 319–404, 408–493, and 499–586; these read LPGN…EFGL, TAFH…FKIN, LRFV…FPGL, and EQVD…KAFV. 7 helical membrane-spanning segments follow: residues 602-622, 626-646, 654-674, 685-705, 734-754, 776-796, and 804-824; these read MAIG…GGLK, YIHL…TGCM, AIMW…AALE, AIIS…AIYV, LKIP…AGFI, FATI…FILC, and VWIA…LLTL. Residues 857 to 881 form a disordered region; the sequence is RAQSFGGKAMSVGSTESRTDGSSTP. Polar residues predominate over residues 868 to 881; sequence VGSTESRTDGSSTP.

Belongs to the divalent anion:Na+ symporter (DASS) superfamily. Na+/sulfate symporter (TC 2.A.47.4) family.

It localises to the cell membrane. In terms of biological role, na(+)/sulfate cotransporter with a probable low-affinity for sulfate. The chain is Probable sodium/sulfate cotransporter 3 (SLT3) from Chlamydomonas reinhardtii (Chlamydomonas smithii).